We begin with the raw amino-acid sequence, 216 residues long: Probable GTP-binding protein EngB (216 aa).

The region spanning Asp-37–Glu-214 is the EngB-type G domain. GTP contacts are provided by residues Gly-45 to Ser-52, Gly-72 to Glu-76, Asp-92 to Gly-95, Thr-159 to Asp-162, and Thr-193 to Ser-195. Ser-52 and Thr-74 together coordinate Mg(2+).

The protein belongs to the TRAFAC class TrmE-Era-EngA-EngB-Septin-like GTPase superfamily. EngB GTPase family. The cofactor is Mg(2+).

Its function is as follows. Necessary for normal cell division and for the maintenance of normal septation. This is Probable GTP-binding protein EngB from Rhodopseudomonas palustris (strain HaA2).